The sequence spans 108 residues: Phosphoribosyl-ATP pyrophosphatase (108 aa).

This sequence belongs to the PRA-PH family.

Its subcellular location is the cytoplasm. It carries out the reaction 1-(5-phospho-beta-D-ribosyl)-ATP + H2O = 1-(5-phospho-beta-D-ribosyl)-5'-AMP + diphosphate + H(+). Its pathway is amino-acid biosynthesis; L-histidine biosynthesis; L-histidine from 5-phospho-alpha-D-ribose 1-diphosphate: step 2/9. This Thiobacillus denitrificans (strain ATCC 25259 / T1) protein is Phosphoribosyl-ATP pyrophosphatase.